A 348-amino-acid chain; its full sequence is Aspartate carbamoyltransferase catalytic subunit (348 aa).

Carbamoyl phosphate is bound by residues Arg59 and Thr60. Residue Lys87 participates in L-aspartate binding. 3 residues coordinate carbamoyl phosphate: Arg109, His142, and Gln145. Residues Arg182 and Arg253 each contribute to the L-aspartate site. Positions 294 and 295 each coordinate carbamoyl phosphate.

This sequence belongs to the aspartate/ornithine carbamoyltransferase superfamily. ATCase family. In terms of assembly, heterododecamer (2C3:3R2) of six catalytic PyrB chains organized as two trimers (C3), and six regulatory PyrI chains organized as three dimers (R2).

It carries out the reaction carbamoyl phosphate + L-aspartate = N-carbamoyl-L-aspartate + phosphate + H(+). The protein operates within pyrimidine metabolism; UMP biosynthesis via de novo pathway; (S)-dihydroorotate from bicarbonate: step 2/3. In terms of biological role, catalyzes the condensation of carbamoyl phosphate and aspartate to form carbamoyl aspartate and inorganic phosphate, the committed step in the de novo pyrimidine nucleotide biosynthesis pathway. The sequence is that of Aspartate carbamoyltransferase catalytic subunit from Prochlorococcus marinus (strain MIT 9313).